We begin with the raw amino-acid sequence, 1162 residues long: Protein OBERON 4 (1162 aa).

Composition is skewed to basic and acidic residues over residues Met1–Asp19, Asn61–Glu77, Phe90–Arg99, and Val118–Leu134. Disordered stretches follow at residues Met1–Ser235, Ile251–Asn307, Asp321–Glu346, and Ser441–Val485. The span at Lys135–Glu146 shows a compositional bias: polar residues. A compositionally biased stretch (basic and acidic residues) spans Ser148 to Asn157. The segment covering Lys163 to Val182 has biased composition (polar residues). Acidic residues predominate over residues Glu203–Pro213. Basic and acidic residues-rich tracts occupy residues Thr225–Ser235, Ser263–Glu300, Asp336–Glu346, and Ser441–Asn457. The segment at Ala835 to Pro899 adopts a PHD-type zinc-finger fold. Positions Met1065–Ala1161 form a coiled coil.

As to quaternary structure, self-interacts. Interacts with OBE1 and OBE2. Interacts with OBE3.

The protein resides in the nucleus. Functionally, probable transcription factor that functions redundantly with OBE3 in specification of the hypophysis and establishment of the embryonic root. Involved in the activation of ARF5/MP-dependent gene expression during embryonic root meristem initiation. Involved in shoot meristem homeostasis. In Arabidopsis thaliana (Mouse-ear cress), this protein is Protein OBERON 4.